We begin with the raw amino-acid sequence, 219 residues long: 2-C-methyl-D-erythritol 4-phosphate cytidylyltransferase (219 aa).

This sequence belongs to the IspD/TarI cytidylyltransferase family. IspD subfamily.

It catalyses the reaction 2-C-methyl-D-erythritol 4-phosphate + CTP + H(+) = 4-CDP-2-C-methyl-D-erythritol + diphosphate. It participates in isoprenoid biosynthesis; isopentenyl diphosphate biosynthesis via DXP pathway; isopentenyl diphosphate from 1-deoxy-D-xylulose 5-phosphate: step 2/6. In terms of biological role, catalyzes the formation of 4-diphosphocytidyl-2-C-methyl-D-erythritol from CTP and 2-C-methyl-D-erythritol 4-phosphate (MEP). This is 2-C-methyl-D-erythritol 4-phosphate cytidylyltransferase from Phocaeicola vulgatus (strain ATCC 8482 / DSM 1447 / JCM 5826 / CCUG 4940 / NBRC 14291 / NCTC 11154) (Bacteroides vulgatus).